The chain runs to 420 residues: Glyceraldehyde-3-phosphate dehydrogenase GAPCP2, chloroplastic (420 aa).

A chloroplast-targeting transit peptide spans 1-66 (MALSSLLRSA…YNAKRVQPIK (66 aa)). Residues 94–95 (RI), Asp-116, and Arg-162 contribute to the NAD(+) site. Residues 233-235 (SCT), Thr-264, 293-294 (TG), and Arg-316 contribute to the D-glyceraldehyde 3-phosphate site. Cys-234 acts as the Nucleophile in catalysis. Asn-398 is an NAD(+) binding site.

This sequence belongs to the glyceraldehyde-3-phosphate dehydrogenase family. As to quaternary structure, homotetramer. As to expression, expressed in shoot and root vasculature, leaf veins and vascular tissue of flowers and siliques.

The protein resides in the plastid. The protein localises to the chloroplast stroma. The enzyme catalyses D-glyceraldehyde 3-phosphate + phosphate + NAD(+) = (2R)-3-phospho-glyceroyl phosphate + NADH + H(+). Involved in plastidial glycolytic pathway and plays a specific role in glycolytic energy production in non-green plastids and chloroplasts. Essential for breakdown of starch to form sucrose for export to non-photosynthetic tissues, and to generate primary metabolites for anabolic pathways such as fatty acid and amino acid synthesis. Plays an important role in plant development by providing substrates for the phosphorylated pathway of serine biosynthesis in roots. Plays a crucial role in pollen development. Functionally redundant with GAPCP1. In Arabidopsis thaliana (Mouse-ear cress), this protein is Glyceraldehyde-3-phosphate dehydrogenase GAPCP2, chloroplastic (GAPCP2).